A 74-amino-acid polypeptide reads, in one-letter code: MTLNELKDGQKAIIVNLNAHKELKNRLLSFGFIKNKNLKKIHSSLKNATIMVELDTSCVILRSDEAKTIEVNLI.

Belongs to the FeoA family.

Functionally, might be involved in Fe(2+) ion uptake. The sequence is that of Putative Fe(2+) transport protein A from Campylobacter jejuni subsp. jejuni serotype O:2 (strain ATCC 700819 / NCTC 11168).